The following is a 644-amino-acid chain: Exoribonuclease 2 (644 aa).

An RNB domain is found at Arg-189–Lys-516. Positions Gly-561–Val-643 constitute an S1 motif domain.

Belongs to the RNR ribonuclease family. RNase II subfamily.

It is found in the cytoplasm. It carries out the reaction Exonucleolytic cleavage in the 3'- to 5'-direction to yield nucleoside 5'-phosphates.. Involved in mRNA degradation. Hydrolyzes single-stranded polyribonucleotides processively in the 3' to 5' direction. The chain is Exoribonuclease 2 from Shigella flexneri serotype 5b (strain 8401).